The chain runs to 416 residues: Thyroid hormone receptor alpha (416 aa).

The span at 1 to 13 shows a compositional bias: polar residues; the sequence is MEPMSNKQDSNSS. A disordered region spans residues 1–37; it reads MEPMSNKQDSNSSEGDEKGWPDVPKRKRKNSQCSMKS. The tract at residues 1 to 58 is modulating; that stretch reads MEPMSNKQDSNSSEGDEKGWPDVPKRKRKNSQCSMKSMSALSVSVPGYIPSYLEKDEP. A compositionally biased stretch (basic and acidic residues) spans 15 to 24; sequence GDEKGWPDVP. C59, C62, C76, C79, C97, C103, C113, and C116 together coordinate Zn(2+). 2 NR C4-type zinc fingers span residues 59–79 and 97–121; these read CVVC…CEGC and CKYE…FKKC. Residues 59–133 constitute a DNA-binding region (nuclear receptor); the sequence is CVVCGDKATG…VGMAMDLVLD (75 aa). The region spanning 169–413 is the NR LBD domain; that stretch reads AEWELIRMAT…PPLFLEVFED (245 aa). R234 provides a ligand contact to 3,3',5-triiodo-L-thyronine.

It belongs to the nuclear hormone receptor family. NR1 subfamily.

The protein localises to the nucleus. Nuclear hormone receptor that can act as a repressor or activator of transcription. High affinity receptor for thyroid hormones, including triiodothyronine and thyroxine. This chain is Thyroid hormone receptor alpha (thra), found in Hippoglossus hippoglossus (Atlantic halibut).